A 271-amino-acid chain; its full sequence is MVVAKKSLGQHFLTDESFLDRIVNALPPLNPLKLIEIGVGLGDLTLKLLDRYPLKTYEIDSNLCEKMRARLKAQKKPFQLELVEKDALFLKEEEPYFLISNLPYYIATRLVLNALKDPKCRGLLVMTQKEVALKFCTKDSQNALSVLVHTIGNATLLFDVPPSAFSPPPKVFSSVFEVIKEPLKEKALASLLQAPFFEEALQKGFETLEDFLKACFSSPRKTLSNNLKKSVSYREKLDKVLDFLALENQPTSVRASEIKDYLKLLEYLLKG.

S-adenosyl-L-methionine is bound by residues His11, Leu13, Gly38, Glu58, Asp86, and Asn101.

The protein belongs to the class I-like SAM-binding methyltransferase superfamily. rRNA adenine N(6)-methyltransferase family. RsmA subfamily.

It localises to the cytoplasm. The enzyme catalyses adenosine(1518)/adenosine(1519) in 16S rRNA + 4 S-adenosyl-L-methionine = N(6)-dimethyladenosine(1518)/N(6)-dimethyladenosine(1519) in 16S rRNA + 4 S-adenosyl-L-homocysteine + 4 H(+). In terms of biological role, specifically dimethylates two adjacent adenosines (A1518 and A1519) in the loop of a conserved hairpin near the 3'-end of 16S rRNA in the 30S particle. May play a critical role in biogenesis of 30S subunits. In Helicobacter pylori (strain G27), this protein is Ribosomal RNA small subunit methyltransferase A.